A 518-amino-acid polypeptide reads, in one-letter code: Tropomyosin-1, isoforms 33/34 (518 aa).

Positions 14–267 (DKDGALERAL…DDLIVEKERY (254 aa)) form a coiled coil. Disordered stretches follow at residues 101-125 (RSEE…ESER) and 288-518 (FWNP…APPA). Residues 293–305 (NPKPPTPKLPTPT) are compositionally biased toward pro residues. Residues 318 to 348 (AAEAAAAAEAEAAEAAAAAGEAGPDGAPAAP) show a composition bias toward low complexity. 2 stretches are compositionally biased toward pro residues: residues 357-374 (EPTP…PPPF) and 394-405 (EPPPPGSEPEPV). The span at 406–518 (PAAEGEAAPA…AAAEGEAPPA (113 aa)) shows a compositional bias: low complexity.

Belongs to the tropomyosin family. Homodimer. As to expression, both isoforms are only expressed in indirect flight muscles.

It localises to the cytoplasm. Its subcellular location is the cytoskeleton. Functionally, tropomyosin, in association with the troponin complex, plays a central role in the calcium dependent regulation of muscle contraction. This chain is Tropomyosin-1, isoforms 33/34 (Tm1), found in Drosophila melanogaster (Fruit fly).